Here is a 1032-residue protein sequence, read N- to C-terminus: Y' element ATP-dependent helicase YPR204W (1032 aa).

The 175-residue stretch at M1–A175 folds into the Helicase ATP-binding domain. Position 11–18 (A11–T18) interacts with ATP. The DEAH box motif lies at D121 to H124. The Helicase C-terminal domain maps to K232–G381. Over residues A455–S634 the composition is skewed to low complexity. The interval A455 to K658 is disordered. Positions A635–K658 are enriched in basic and acidic residues.

It belongs to the helicase family. Yeast subtelomeric Y' repeat subfamily.

In terms of biological role, catalyzes DNA unwinding and is involved in telomerase-independent telomere maintenance. This Saccharomyces cerevisiae (strain ATCC 204508 / S288c) (Baker's yeast) protein is Y' element ATP-dependent helicase YPR204W.